The chain runs to 433 residues: Gamma-glutamyl phosphate reductase 1 (433 aa).

This sequence belongs to the gamma-glutamyl phosphate reductase family.

The protein resides in the cytoplasm. The catalysed reaction is L-glutamate 5-semialdehyde + phosphate + NADP(+) = L-glutamyl 5-phosphate + NADPH + H(+). Its pathway is amino-acid biosynthesis; L-proline biosynthesis; L-glutamate 5-semialdehyde from L-glutamate: step 2/2. Catalyzes the NADPH-dependent reduction of L-glutamate 5-phosphate into L-glutamate 5-semialdehyde and phosphate. The product spontaneously undergoes cyclization to form 1-pyrroline-5-carboxylate. In Synechocystis sp. (strain ATCC 27184 / PCC 6803 / Kazusa), this protein is Gamma-glutamyl phosphate reductase 1.